The following is a 297-amino-acid chain: Phenylalanine-4-hydroxylase (297 aa).

Residues His-138, His-143, and Glu-184 each coordinate Fe cation.

Belongs to the biopterin-dependent aromatic amino acid hydroxylase family. In terms of assembly, monomer. The cofactor is Fe(2+).

It catalyses the reaction (6R)-L-erythro-5,6,7,8-tetrahydrobiopterin + L-phenylalanine + O2 = (4aS,6R)-4a-hydroxy-L-erythro-5,6,7,8-tetrahydrobiopterin + L-tyrosine. The protein operates within amino-acid degradation; L-phenylalanine degradation; acetoacetate and fumarate from L-phenylalanine: step 1/6. The polypeptide is Phenylalanine-4-hydroxylase (phhA) (Chromobacterium violaceum (strain ATCC 12472 / DSM 30191 / JCM 1249 / CCUG 213 / NBRC 12614 / NCIMB 9131 / NCTC 9757 / MK)).